A 3625-amino-acid chain; its full sequence is Cubilin (3625 aa).

Positions 1-20 are cleaved as a signal peptide; the sequence is MVNNMSLLFLWSLVIFLTFA. Positions 21 to 36 are cleaved as a propeptide — removed in mature form; sequence ESYGEAGGPELQRHKR. The tract at residues 43–50 is interaction with AMN; that stretch reads PRMAAERG. Residue Asn-106 is glycosylated (N-linked (GlcNAc...) asparagine). The EGF-like 1 domain maps to 133–169; sequence DGKVCSSNPCQNGATCLNLHDSFFCICPSQWKGPLCS. Disulfide bonds link Cys-137–Cys-148, Cys-142–Cys-157, Cys-159–Cys-168, Cys-175–Cys-191, Cys-185–Cys-200, and Cys-202–Cys-211. The EGF-like 2; calcium-binding domain occupies 171–212; that stretch reads DVNECEIYSGTPLGCQNGATCINTPGSYSCLCSPETHGPQCA. N-linked (GlcNAc...) asparagine glycosylation occurs at Asn-257. Positions 264-305 constitute an EGF-like 3; calcium-binding domain; sequence DRDECSSWPAPCSALVPCFNTLGSFYCGACPTGWQGNGYICE. Cystine bridges form between Cys-268-Cys-281, Cys-275-Cys-290, Cys-293-Cys-304, Cys-310-Cys-325, Cys-317-Cys-334, Cys-337-Cys-348, Cys-354-Cys-367, Cys-361-Cys-377, Cys-379-Cys-393, Cys-400-Cys-410, Cys-405-Cys-419, Cys-421-Cys-430, Cys-437-Cys-448, Cys-442-Cys-457, Cys-459-Cys-468, Cys-475-Cys-501, Cys-528-Cys-550, Cys-591-Cys-617, Cys-644-Cys-666, and Cys-709-Cys-734. The 44-residue stretch at 306–349 folds into the EGF-like 4; calcium-binding domain; it reads DINECEINNGGCSVAPPVECVNTPGSYYCPSCPPGYQGDGRMCT. 2 consecutive EGF-like domains span residues 350–394 and 396–431; these read LIDL…HGCV and LSNVCLTRPCLHGQCMETASGYVCNCDSGWAGMNCT. Asn-429 carries an N-linked (GlcNAc...) asparagine glycan. Residues 433–469 enclose the EGF-like 7; calcium-binding domain; that stretch reads NINECLSNPCLNGGTCVDGINAFSCECTRFWTGSLCH. CUB domains follow at residues 475–587, 591–703, 709–816, 817–928, 932–1042, 1045–1163, 1167–1279, 1280–1391, 1393–1508, 1512–1621, 1622–1736, 1740–1852, 1854–1965, 1980–2093, 2094–2215, 2219–2336, 2338–2450, 2454–2567, 2572–2689, 2691–2803, 2807–2921, 2922–3037, 3039–3152, 3159–3276, 3280–3397, 3397–3509, and 3513–3625; these read CGGT…WETR, CGGV…YLTT, CGGN…YQVA, CGGE…FSTE, CGEI…YEAT, SAGN…WDGS, CGGN…YQQT, CDNV…WLVH, CGGE…WRAV, CGGI…FRQA, CGGH…YVAS, CGGI…FNNI, GNDH…WFAM, CGGF…FHKS, CGGY…YEAK, CGGN…YSIA, CGGT…FDSS, CGGD…YTSS, CGGS…YSFT, CGGI…WNTE, CGGI…FLSR, CGRN…YRIT, CGGT…FRET, CGGY…YTLL, CGGT…IAGC, CSRE…WTSS, and CGGT…TWAS. N-linked (GlcNAc...) asparagine glycans are attached at residues Asn-712 and Asn-749. Cys-761 and Cys-779 form a disulfide bridge. The N-linked (GlcNAc...) asparagine glycan is linked to Asn-781. Cys-817 and Cys-842 are disulfide-bonded. Asn-857 carries an N-linked (GlcNAc...) asparagine glycan. 2 disulfide bridges follow: Cys-869/Cys-891 and Cys-932/Cys-958. Asn-957 is a glycosylation site (N-linked (GlcNAc...) asparagine). A Ca(2+)-binding site is contributed by Glu-980. Residue Asn-984 is glycosylated (N-linked (GlcNAc...) asparagine). An intrachain disulfide couples Cys-985 to Cys-1005. Ca(2+)-binding residues include Asp-988, Asp-1027, Asp-1029, and Leu-1030. Asn-1048 is a glycosylation site (N-linked (GlcNAc...) asparagine). Ca(2+)-binding residues include Glu-1097, Asp-1107, and Asp-1148. The cysteines at positions 1104 and 1126 are disulfide-linked. Cysteines 1167 and 1193 form a disulfide. Asn-1170 carries an N-linked (GlcNAc...) asparagine glycan. Glu-1215 provides a ligand contact to Ca(2+). An N-linked (GlcNAc...) asparagine glycan is attached at Asn-1219. Cys-1220 and Cys-1242 form a disulfide bridge. Ca(2+) is bound by residues Asp-1223, Asp-1264, Gly-1266, and Gln-1267. Cys-1280 and Cys-1308 are disulfide-bonded. Asn-1287, Asn-1309, and Asn-1321 each carry an N-linked (GlcNAc...) asparagine glycan. Glu-1330 contributes to the Ca(2+) binding site. The N-linked (GlcNAc...) asparagine glycan is linked to Asn-1334. A disulfide bridge links Cys-1335 with Cys-1353. Positions 1338, 1375, and 1377 each coordinate Ca(2+). 2 disulfides stabilise this stretch: Cys-1393–Cys-1419 and Cys-1446–Cys-1468. A glycan (N-linked (GlcNAc...) asparagine) is linked at Asn-1502. The cysteines at positions 1512 and 1538 are disulfide-linked. An N-linked (GlcNAc...) asparagine glycan is attached at Asn-1553. 5 cysteine pairs are disulfide-bonded: Cys-1565/Cys-1583, Cys-1622/Cys-1649, Cys-1677/Cys-1699, Cys-1740/Cys-1766, and Cys-1793/Cys-1814. Asn-1648 is a glycosylation site (N-linked (GlcNAc...) asparagine). 3 N-linked (GlcNAc...) asparagine glycosylation sites follow: Asn-1804, Asn-1821, and Asn-1887. 3 disulfides stabilise this stretch: Cys-1907–Cys-1929, Cys-1980–Cys-2008, and Cys-2034–Cys-2056. 2 N-linked (GlcNAc...) asparagine glycosylation sites follow: Asn-2087 and Asn-2119. 2 disulfide bridges follow: Cys-2094–Cys-2120 and Cys-2219–Cys-2249. Asn-2276 carries an N-linked (GlcNAc...) asparagine glycan. 2 cysteine pairs are disulfide-bonded: Cys-2277-Cys-2299 and Cys-2338-Cys-2365. Asn-2388 and Asn-2402 each carry an N-linked (GlcNAc...) asparagine glycan. 3 disulfides stabilise this stretch: Cys-2392-Cys-2413, Cys-2454-Cys-2480, and Cys-2507-Cys-2529. Asn-2533, Asn-2583, Asn-2594, and Asn-2612 each carry an N-linked (GlcNAc...) asparagine glycan. Cys-2572 and Cys-2601 form a disulfide bridge. Disulfide bonds link Cys-2630–Cys-2651, Cys-2691–Cys-2717, Cys-2744–Cys-2766, Cys-2807–Cys-2833, and Cys-2862–Cys-2885. Residues Asn-2887, Asn-2925, Asn-2928, and Asn-2947 are each glycosylated (N-linked (GlcNAc...) asparagine). 2 cysteine pairs are disulfide-bonded: Cys-2922-Cys-2948 and Cys-2979-Cys-3001. Thr-3010 carries the post-translational modification Phosphothreonine. Cystine bridges form between Cys-3039–Cys-3066 and Cys-3093–Cys-3115. 3 N-linked (GlcNAc...) asparagine glycosylation sites follow: Asn-3044, Asn-3105, and Asn-3127. 2 disulfide bridges follow: Cys-3159–Cys-3187 and Cys-3217–Cys-3239. N-linked (GlcNAc...) asparagine glycosylation is found at Asn-3270 and Asn-3285. Cystine bridges form between Cys-3280/Cys-3308 and Cys-3334/Cys-3356. Asn-3359 carries N-linked (GlcNAc...) asparagine glycosylation. The cysteines at positions 3397 and 3423 are disulfide-linked. N-linked (GlcNAc...) asparagine glycans are attached at residues Asn-3432, Asn-3459, and Asn-3535. Intrachain disulfides connect Cys-3450–Cys-3472, Cys-3513–Cys-3539, and Cys-3566–Cys-3588.

Interacts with AMN. Component of the cubam complex composed of one CUBN trimer and one AMN chain. The cubam complex can dimerize. Interacts with LRP2 in a dual-receptor complex in a calcium-dependent manner. Found in a complex with PID1/PCLI1, LRP1 and CUBNI. Interacts with LRP1 and PID1/PCLI1. The precursor is cleaved by a trans-Golgi proteinase furin, removing a propeptide. Post-translationally, N-glycosylated. As to expression, detected in kidney cortex (at protein level).

The protein resides in the apical cell membrane. Its subcellular location is the cell membrane. It localises to the membrane. The protein localises to the coated pit. It is found in the endosome. The protein resides in the lysosome membrane. In terms of biological role, endocytic receptor which plays a role in lipoprotein, vitamin and iron metabolism by facilitating their uptake. Acts together with LRP2 to mediate endocytosis of high-density lipoproteins, GC, hemoglobin, ALB, TF and SCGB1A1. Acts together with AMN to mediate endocytosis of the CBLIF-cobalamin complex. Binds to ALB, MB, Kappa and lambda-light chains, TF, hemoglobin, GC, SCGB1A1, APOA1, high density lipoprotein, and the CBLIF-cobalamin complex. Ligand binding requires calcium. Serves as important transporter in several absorptive epithelia, including intestine, renal proximal tubules and embryonic yolk sac. May play an important role in the development of the peri-implantation embryo through internalization of APOA1 and cholesterol. Binds to LGALS3 at the maternal-fetal interface. This Sus scrofa (Pig) protein is Cubilin (CUBN).